The sequence spans 214 residues: Small ribosomal subunit protein eS6 (214 aa).

This sequence belongs to the eukaryotic ribosomal protein eS6 family.

This Saccharolobus solfataricus (strain ATCC 35092 / DSM 1617 / JCM 11322 / P2) (Sulfolobus solfataricus) protein is Small ribosomal subunit protein eS6.